We begin with the raw amino-acid sequence, 224 residues long: Cytochrome c oxidase subunit 2 (224 aa).

Residues methionine 1 to histidine 26 lie on the Mitochondrial intermembrane side of the membrane. Residues alanine 27–asparagine 48 traverse the membrane as a helical segment. Residues threonine 49 to glutamate 62 are Mitochondrial matrix-facing. A helical transmembrane segment spans residues threonine 63–arginine 82. The Mitochondrial intermembrane portion of the chain corresponds to leucine 83–asparagine 224. Residues histidine 161, cysteine 196, glutamate 198, cysteine 200, histidine 204, and methionine 207 each coordinate Cu cation. Residue glutamate 198 coordinates Mg(2+).

Belongs to the cytochrome c oxidase subunit 2 family. As to quaternary structure, component of the cytochrome c oxidase (complex IV, CIV), a multisubunit enzyme composed of a catalytic core of 3 subunits and several supernumerary subunits. The complex exists as a monomer or a dimer and forms supercomplexes (SCs) in the inner mitochondrial membrane with ubiquinol-cytochrome c oxidoreductase (cytochrome b-c1 complex, complex III, CIII). Requires Cu cation as cofactor.

It is found in the mitochondrion inner membrane. It carries out the reaction 4 Fe(II)-[cytochrome c] + O2 + 8 H(+)(in) = 4 Fe(III)-[cytochrome c] + 2 H2O + 4 H(+)(out). Its function is as follows. Component of the cytochrome c oxidase, the last enzyme in the mitochondrial electron transport chain which drives oxidative phosphorylation. The respiratory chain contains 3 multisubunit complexes succinate dehydrogenase (complex II, CII), ubiquinol-cytochrome c oxidoreductase (cytochrome b-c1 complex, complex III, CIII) and cytochrome c oxidase (complex IV, CIV), that cooperate to transfer electrons derived from NADH and succinate to molecular oxygen, creating an electrochemical gradient over the inner membrane that drives transmembrane transport and the ATP synthase. Cytochrome c oxidase is the component of the respiratory chain that catalyzes the reduction of oxygen to water. Electrons originating from reduced cytochrome c in the intermembrane space (IMS) are transferred via the dinuclear copper A center (CU(A)) of subunit 2 and heme A of subunit 1 to the active site in subunit 1, a binuclear center (BNC) formed by heme A3 and copper B (CU(B)). The BNC reduces molecular oxygen to 2 water molecules using 4 electrons from cytochrome c in the IMS and 4 protons from the mitochondrial matrix. This Albinaria caerulea (Land snail) protein is Cytochrome c oxidase subunit 2 (COII).